Consider the following 171-residue polypeptide: Calcium-binding protein F-like (171 aa).

4 consecutive EF-hand domains span residues 6–41 (KIFE…KMNG), 57–80 (IDMD…KAKK), 89–124 (AALA…RGYT), and 130–159 (DQYL…RRID). The Ca(2+) site is built by Asp-19, Asn-21, Asp-23, Ser-25, and Asp-30. Positions 102, 104, 106, 108, 113, 137, 139, 141, 143, and 148 each coordinate Ca(2+).

In Dictyostelium discoideum (Social amoeba), this protein is Calcium-binding protein F-like (cbp12).